The chain runs to 196 residues: Adenylyl-sulfate kinase (196 aa).

31–38 serves as a coordination point for ATP; that stretch reads GLSGAGKS. Ser105 serves as the catalytic Phosphoserine intermediate.

This sequence belongs to the APS kinase family.

The enzyme catalyses adenosine 5'-phosphosulfate + ATP = 3'-phosphoadenylyl sulfate + ADP + H(+). The protein operates within sulfur metabolism; hydrogen sulfide biosynthesis; sulfite from sulfate: step 2/3. Its function is as follows. Catalyzes the synthesis of activated sulfate. This Aeromonas salmonicida (strain A449) protein is Adenylyl-sulfate kinase.